The following is a 395-amino-acid chain: Protein phosphatase methylesterase 1 (395 aa).

Active-site residues include S194, D222, and H348.

Belongs to the AB hydrolase superfamily.

The catalysed reaction is [phosphatase 2A protein]-C-terminal L-leucine methyl ester + H2O = [phosphatase 2A protein]-C-terminal L-leucine + methanol + H(+). Functionally, demethylates proteins that have been reversibly carboxymethylated. Demethylates the phosphatase PP2A catalytic subunit. This chain is Protein phosphatase methylesterase 1 (PPE1), found in Kluyveromyces lactis (strain ATCC 8585 / CBS 2359 / DSM 70799 / NBRC 1267 / NRRL Y-1140 / WM37) (Yeast).